The chain runs to 221 residues: Deoxyribose-phosphate aldolase (221 aa).

Asp-90 acts as the Proton donor/acceptor in catalysis. Lys-152 (schiff-base intermediate with acetaldehyde) is an active-site residue. Lys-181 (proton donor/acceptor) is an active-site residue.

The protein belongs to the DeoC/FbaB aldolase family. DeoC type 1 subfamily.

The protein localises to the cytoplasm. It carries out the reaction 2-deoxy-D-ribose 5-phosphate = D-glyceraldehyde 3-phosphate + acetaldehyde. It functions in the pathway carbohydrate degradation; 2-deoxy-D-ribose 1-phosphate degradation; D-glyceraldehyde 3-phosphate and acetaldehyde from 2-deoxy-alpha-D-ribose 1-phosphate: step 2/2. Catalyzes a reversible aldol reaction between acetaldehyde and D-glyceraldehyde 3-phosphate to generate 2-deoxy-D-ribose 5-phosphate. The polypeptide is Deoxyribose-phosphate aldolase (Exiguobacterium sibiricum (strain DSM 17290 / CCUG 55495 / CIP 109462 / JCM 13490 / 255-15)).